We begin with the raw amino-acid sequence, 254 residues long: Probable pectate lyase E (254 aa).

Residues 1-17 (MLQSLLLLPLFLTSAFA) form the signal peptide. Asparagine 175 is a glycosylation site (N-linked (GlcNAc...) asparagine). The tract at residues 228 to 254 (NNNGKEPKKKSSGPSKACEYNQPLKKC) is disordered.

It belongs to the polysaccharide lyase 3 family. Ca(2+) serves as cofactor.

Its subcellular location is the secreted. The enzyme catalyses Eliminative cleavage of (1-&gt;4)-alpha-D-galacturonan to give oligosaccharides with 4-deoxy-alpha-D-galact-4-enuronosyl groups at their non-reducing ends.. In terms of biological role, pectinolytic enzyme consist of four classes of enzymes: pectin lyase, polygalacturonase, pectin methylesterase and rhamnogalacturonase. Among pectinolytic enzymes, pectin lyase is the most important in depolymerization of pectin, since it cleaves internal glycosidic bonds of highly methylated pectins. Favors pectate, the anion, over pectin, the methyl ester. The sequence is that of Probable pectate lyase E (plyE) from Aspergillus clavatus (strain ATCC 1007 / CBS 513.65 / DSM 816 / NCTC 3887 / NRRL 1 / QM 1276 / 107).